Consider the following 221-residue polypeptide: Interleukin-12 subunit alpha (221 aa).

The signal sequence occupies residues 1–25; the sequence is MCPLRSLLLISTLVLLHHLPHLSLG. Cystine bridges form between Cys-39–Cys-112, Cys-66–Cys-198, and Cys-87–Cys-125. The N-linked (GlcNAc...) asparagine glycan is linked to Asn-95.

It belongs to the IL-6 superfamily. As to quaternary structure, heterodimer with IL12B; disulfide-linked. This heterodimer is known as interleukin IL-12. Heterodimer with EBI3/IL27B; not disulfide-linked. This heterodimer is known as interleukin IL-35. Interacts with NBR1; this interaction promotes IL-12 secretion.

The protein resides in the secreted. Heterodimerizes with IL12B to form the IL-12 cytokine or with EBI3/IL27B to form the IL-35 cytokine. IL-12 is primarily produced by professional antigen-presenting cells (APCs) such as B-cells and dendritic cells (DCs) as well as macrophages and granulocytes and regulates T-cell and natural killer-cell responses, induces the production of interferon-gamma (IFN-gamma), favors the differentiation of T-helper 1 (Th1) cells and is an important link between innate resistance and adaptive immunity. Mechanistically, exerts its biological effects through a receptor composed of IL12R1 and IL12R2 subunits. Binding to the receptor results in the rapid tyrosine phosphorylation of a number of cellular substrates including the JAK family kinases TYK2 and JAK2. In turn, recruited STAT4 gets phosphorylated and translocates to the nucleus where it regulates cytokine/growth factor responsive genes. As part of IL-35, plays essential roles in maintaining the immune homeostasis of the liver microenvironment and also functions as an immune-suppressive cytokine. Mediates biological events through unconventional receptors composed of IL12RB2 and gp130/IL6ST heterodimers or homodimers. Signaling requires the transcription factors STAT1 and STAT4, which form a unique heterodimer that binds to distinct DNA sites. The protein is Interleukin-12 subunit alpha (IL12A) of Bubalus carabanensis (Swamp type water buffalo).